A 2130-amino-acid polypeptide reads, in one-letter code: Bromodomain adjacent to zinc finger domain protein 2B (2130 aa).

7 disordered regions span residues 1–42 (MESG…TGAA), 82–118 (LFAP…SLNG), 151–293 (GGRK…QKQP), 491–518 (KTTG…PVSN), 543–633 (VDSD…SSIG), 756–790 (EGRR…GSTE), and 944–966 (RKKA…LNKE). Residues 8 to 33 (TSSSVSSTAAASSPVSSTPSVASAVS) are compositionally biased toward low complexity. The segment covering 183–206 (ESSSNSDSDSGSSSDTSSEGISSS) has biased composition (low complexity). The segment covering 207–234 (DSDDLEEDEEEEEDQSAEESEDDESDSE) has biased composition (acidic residues). A compositionally biased stretch (basic and acidic residues) spans 250-270 (GVKDMKTDGQKAHEKSQEKRT). Positions 272–283 (QQIPLVSDSQTH) are enriched in polar residues. The segment covering 284 to 293 (SSFQSQQKQP) has biased composition (low complexity). Residues 492–505 (TTGNRTLVVPSTSP) are compositionally biased toward polar residues. Over residues 543-554 (VDSDAPSSKESD) the composition is skewed to basic and acidic residues. The segment covering 555–611 (DSNDDDDDDEDEDEDDEDDDSDDSQSESDSNSESDTDGSEDEDDEDDKDQDESDTDT) has biased composition (acidic residues). The segment covering 623-633 (TGSSIKSSSIG) has biased composition (low complexity). In terms of domain architecture, MBD spans 687–762 (VTDERELRVP…RAMEGRRGRP (76 aa)). The span at 756–775 (EGRRGRPPNPDRQHSREESR) shows a compositional bias: basic and acidic residues. Residues 797–984 (AKLLRKLQAQ…ELEMAKELKK (188 aa)) adopt a coiled-coil conformation. The DDT domain maps to 1010–1075 (GSTFSDCLMI…VTAAVCDPGL (66 aa)). 4 disordered regions span residues 1186 to 1265 (TGKR…DQTV), 1431 to 1454 (SLCS…NLFS), 1499 to 1545 (VTHV…PFAM), and 1773 to 1795 (HKKH…ERKN). The segment covering 1220–1244 (SDYDDDDDDDSDDQADEDDEDEEDK) has biased composition (acidic residues). The segment covering 1245–1254 (EDKKGKKAEV) has biased composition (basic and acidic residues). The span at 1514 to 1526 (SHPPSKSPSPVPS) shows a compositional bias: pro residues. The PHD-type zinc-finger motif lies at 1895–1945 (KVYCQICRKGDNEELLLLCDGCDKGCHTYCHRPKITTIPDGDWFCPACIAK). The segment at 1957 to 2019 (QIKGKKSNEQ…KQENFTAIKK (63 aa)) is disordered. Residues 1991–2002 (GKTEPKKRKMDE) show a composition bias toward basic and acidic residues. Polar residues predominate over residues 2004–2014 (VSVSQGKQENF). The 105-residue stretch at 2022–2126 (RDDSKDLAIC…KYFEKKWTEI (105 aa)) folds into the Bromo domain.

Belongs to the WAL family.

Its subcellular location is the nucleus. Functionally, regulatory subunit of the ATP-dependent BRF-1 and BRF-5 ISWI chromatin remodeling complexes, which form ordered nucleosome arrays on chromatin and facilitate access to DNA during DNA-templated processes such as DNA replication, transcription, and repair. Both complexes regulate the spacing of nucleosomes along the chromatin and have the ability to slide mononucleosomes to the center of a DNA template. The BRF-1 ISWI chromatin remodeling complex has a lower ATP hydrolysis rate than the BRF-5 ISWI chromatin remodeling complex. Chromatin reader protein. Represses the expression of mitochondrial function-related genes, perhaps by transcriptional regulation. This chain is Bromodomain adjacent to zinc finger domain protein 2B (BAZ2B), found in Gallus gallus (Chicken).